A 296-amino-acid polypeptide reads, in one-letter code: uncharacterized protein (296 aa).

Transmembrane regions (helical) follow at residues phenylalanine 10 to leucine 29, tyrosine 36 to leucine 58, phenylalanine 112 to threonine 131, isoleucine 188 to arginine 210, methionine 241 to phenylalanine 260, and methionine 273 to isoleucine 295.

The protein resides in the cell membrane. This is an uncharacterized protein from Clostridium acetobutylicum (strain ATCC 824 / DSM 792 / JCM 1419 / IAM 19013 / LMG 5710 / NBRC 13948 / NRRL B-527 / VKM B-1787 / 2291 / W).